The sequence spans 484 residues: MTSSSGVDNEISLDSPMPIFNESSTLKPIRVAGVVTTGTDHIDPSVLQAYLDDTIMKSITLGQLVKNADVLNKRLCQHHIALNAKQSFHFQGNTYISDEKETHDVVPLMEVVSQLDILPPKTFTAKTGTNFGNDNDAEAYLQFEKLIDKKYLKLPTRVNLEILRGTKIHSSFLFNSYSSLSPQSILNLKVFSQFYNWNTNKGLDIGQRGARLSLRYEPLFLHKLLHNPHSNESPTLFHEWFLETCWRSTKICSQGTSAPYMYSGTMLSQAGDQLRTILGHTFVLDKRDHIMCPTKGSMLKWSNELSPGKHLKTQLELNSVKSWMNDDFITFSTTIKTGYLKNLSSQQSLPVHICDKFQSGGPSDIRGFQTFGLGPRDLYDAVGGDAFVSYGLSVFSRLPWKKVEKSNFRLHWFFNGGKLVNHDNTSLGNCIGQLSKEHSTSTGIGLVLRHPMARFELNFTLPITAHENDLIRKGFQFGLGLAFL.

The protein belongs to the SAM50/omp85 family. Component of the mitochondrial outer membrane sorting assembly machinery (SAM or TOB) complex, which at least consists of SAM35, SAM37 and SAM50. Associates with the mitochondrial contact site and cristae organizing system (MICOS) complex (also known as MINOS or MitOS complex).

It localises to the mitochondrion outer membrane. Functionally, component of the mitochondrial outer membrane sorting assembly machinery (SAM or TOB) complex, which is required for the sorting of proteins with complicated topology, such as beta-barrel proteins, to the mitochondrial outer membrane after import by the TOM complex. The polypeptide is Sorting assembly machinery 50 kDa subunit (SAM50) (Saccharomyces cerevisiae (strain ATCC 204508 / S288c) (Baker's yeast)).